The following is a 231-amino-acid chain: Uracil phosphoribosyltransferase (231 aa).

38-42 (KGLVR) provides a ligand contact to GTP. 5-phospho-alpha-D-ribose 1-diphosphate-binding positions include arginine 87, arginine 112, and 140 to 148 (DPMIATGST). Uracil-binding positions include isoleucine 203 and 208 to 210 (GDA). Residue aspartate 209 participates in 5-phospho-alpha-D-ribose 1-diphosphate binding.

Belongs to the UPRTase family. The cofactor is Mg(2+).

The catalysed reaction is UMP + diphosphate = 5-phospho-alpha-D-ribose 1-diphosphate + uracil. It functions in the pathway pyrimidine metabolism; UMP biosynthesis via salvage pathway; UMP from uracil: step 1/1. Its activity is regulated as follows. Allosterically activated by GTP. Its function is as follows. Catalyzes the conversion of uracil and 5-phospho-alpha-D-ribose 1-diphosphate (PRPP) to UMP and diphosphate. This Methanococcus maripaludis (strain DSM 14266 / JCM 13030 / NBRC 101832 / S2 / LL) protein is Uracil phosphoribosyltransferase.